Reading from the N-terminus, the 528-residue chain is RNA polymerase sigma factor SigA (528 aa).

Residues 1 to 10 (MAATKASTAT) show a composition bias toward polar residues. The disordered stretch occupies residues 1–211 (MAATKASTAT…FVWDEDESEA (211 aa)). Composition is skewed to low complexity over residues 19-31 (TKSPAASASGAKT), 38-56 (AKSASGSPPAKRATKPAAR), and 80-92 (AAKSAAAKAPSAR). Residues 100–109 (APKDAQHEAA) are compositionally biased toward basic and acidic residues. A compositionally biased stretch (acidic residues) spans 110 to 173 (TDPEDALDSV…DDEDHEDLEA (64 aa)). Positions 295-365 (LLEANLRLVV…TRAMADQART (71 aa)) are sigma-70 factor domain-2. Residues 319–322 (DLIQ) carry the Interaction with polymerase core subunit RpoC motif. A sigma-70 factor domain-3 region spans residues 374-450 (EVINKLGRIQ…DSEAVVAVDA (77 aa)). Residues 463 to 516 (VLDTLSEREAGVVRLRFGLTDGQPRTLDEIGQVYGVTRERIRQIESKTMSKLRH) form a sigma-70 factor domain-4 region. Residues 489 to 508 (LDEIGQVYGVTRERIRQIES) constitute a DNA-binding region (H-T-H motif).

The protein belongs to the sigma-70 factor family. RpoD/SigA subfamily. As to quaternary structure, interacts transiently with the RNA polymerase catalytic core.

Its subcellular location is the cytoplasm. In terms of biological role, sigma factors are initiation factors that promote the attachment of RNA polymerase to specific initiation sites and are then released. This sigma factor is the primary sigma factor during exponential growth. The chain is RNA polymerase sigma factor SigA from Mycobacterium bovis (strain ATCC BAA-935 / AF2122/97).